Consider the following 55-residue polypeptide: Large ribosomal subunit protein bL32 (55 aa).

The segment at 1-27 is disordered; the sequence is MAVQQNKPTRSKRGMRRSHDALTTATL.

It belongs to the bacterial ribosomal protein bL32 family.

The polypeptide is Large ribosomal subunit protein bL32 (Yersinia enterocolitica serotype O:8 / biotype 1B (strain NCTC 13174 / 8081)).